The primary structure comprises 133 residues: UPF0225 protein BP2036 (133 aa).

This sequence belongs to the UPF0225 family.

The protein is UPF0225 protein BP2036 of Bordetella pertussis (strain Tohama I / ATCC BAA-589 / NCTC 13251).